The following is a 74-amino-acid chain: uncharacterized protein (74 aa).

Disordered regions lie at residues 1–26 and 46–74; these read MNGPRYAHSNYGGNKGGPSNSTSGVF and ITNSPNSNSRGSSSSSSTSKSSSKTSFTQ. The chain crosses the membrane as a helical span at residues 34 to 50; that stretch reads VSNKSIMLISLKITNSP. The span at 47–74 shows a compositional bias: low complexity; it reads TNSPNSNSRGSSSSSSTSKSSSKTSFTQ.

It localises to the membrane. This is an uncharacterized protein from Dictyostelium discoideum (Social amoeba).